The chain runs to 617 residues: Chaperone protein HscA homolog (617 aa).

It belongs to the heat shock protein 70 family.

Functionally, chaperone involved in the maturation of iron-sulfur cluster-containing proteins. Has a low intrinsic ATPase activity which is markedly stimulated by HscB. The protein is Chaperone protein HscA homolog of Aliivibrio salmonicida (strain LFI1238) (Vibrio salmonicida (strain LFI1238)).